Reading from the N-terminus, the 1119-residue chain is MEIKRFGRIREVIPLPPLTEIQVESYRRALQADVPPEKRENVGIQAAFRETFPIEEEDKGKGGLVLDFLEYRLGEPPFPQDECREKDLTYQAPLYARLQLIHKDTGLIKEDEVFLGHIPLMTEDGSFIINGADRVIVSQIHRSPGVYFTPDPARPGRYIASIIPLPKRGPWIDLEVEPNGVVSMKVNKRKFPLVLLLRVLGYDQETLARELGAYGELVQGLMDESVFAMRPEEALIRLFTLLRPGDPPKRDKAVAYVYGLIADPRRYDLGEAGRYKAEEKLGIRLSGRTLARFEDGEFKDEVFLPTLRYLFALTAGVPGHEVDDIDHLGNRRIRTVGELMTDQFRVGLARLARGVRERMLMGSEDSLTPAKLVNSRPLEAAIREFFSRSQLSQFKDETNPLSSLRHKRRISALGPGGLTRERAGFDVRDVHRTHYGRICPVETPEGANIGLITSLAAYARVDELGFIRTPYRRVVGGVVTDEVVYMTATEEDRYTIAQANTPLEGNRIAAERVVARRKGEPVIVSPEEVEFMDVSPKQVFSVNTNLIPFLEHDDANRALMGSNMQTQAVPLIRAQAPVVMTGLEERVVRDSLAALYAEEDGEVAKVDGNRIVVRYEDGRLVEYPLRRFYRSNQGTALDQRPRVVVGQRVRKGDLLADGPASENGFLALGQNVLVAIMPFDGYNFEDAIVISEELLKRDFYTSIHIERYEIEARDTKLGPERITRDIPHLSEAALRDLDEEGVVRIGAEVKPGDILVGRTSFKGESEPTPEERLLRSIFGEKARDVKDTSLRVPPGEGGIVVRTVRLRRGDPGVELKPGVREVVRVYVAQKRKLQVGDKLANRHGNKGVVAKILPVEDMPHLPDGTPVDVILNPLGVPSRMNLGQILETHLGLAGYFLGQRYISPIFDGAKEPEIKELLAQAFEVYFGKRKGEGFGVDKREVEVLRRAEKLGLVTPGKPPEEQLKELFLQGKVVLYDGRTGEPIEGPIVVGQMFIMKLYHMVEDKMHARSTGPYSLITQQPLGGKAQFGGQRFGEMEVWALEAYGAAHTLQEMLTLKSDDIEGRNAAYEAIIKGEDVPEPSVPESFRVLVKELQALALDVQTLDEKDNPVDIFEGLASKR.

This sequence belongs to the RNA polymerase beta chain family. In terms of assembly, the RNAP catalytic core consists of 2 alpha, 1 beta, 1 beta' and 1 omega subunit. When a sigma factor is associated with the core the holoenzyme is formed, which can initiate transcription.

It catalyses the reaction RNA(n) + a ribonucleoside 5'-triphosphate = RNA(n+1) + diphosphate. Functionally, DNA-dependent RNA polymerase catalyzes the transcription of DNA into RNA using the four ribonucleoside triphosphates as substrates. The chain is DNA-directed RNA polymerase subunit beta from Thermus thermophilus (strain ATCC BAA-163 / DSM 7039 / HB27).